Here is a 551-residue protein sequence, read N- to C-terminus: Adenylosuccinate synthetase (551 aa).

Residues 131-137 (GDEGKGK) and 159-161 (GHT) each bind GTP. The active-site Proton acceptor is the aspartate 132. 2 residues coordinate Mg(2+): aspartate 132 and glycine 159. IMP is bound by residues 132–135 (DEGK), 157–160 (NAGH), threonine 248, arginine 262, asparagine 339, threonine 354, and arginine 418. Histidine 160 acts as the Proton donor in catalysis. 414 to 420 (TTTGRAR) is a binding site for substrate. Residues arginine 420, 446–448 (KLD), and 528–530 (GVG) contribute to the GTP site.

This sequence belongs to the adenylosuccinate synthetase family. In terms of assembly, homodimer. It depends on Mg(2+) as a cofactor.

It is found in the cytoplasm. The catalysed reaction is IMP + L-aspartate + GTP = N(6)-(1,2-dicarboxyethyl)-AMP + GDP + phosphate + 2 H(+). It functions in the pathway purine metabolism; AMP biosynthesis via de novo pathway; AMP from IMP: step 1/2. Plays an important role in the de novo pathway and in the salvage pathway of purine nucleotide biosynthesis. Catalyzes the first committed step in the biosynthesis of AMP from IMP. In Phytophthora infestans (strain T30-4) (Potato late blight agent), this protein is Adenylosuccinate synthetase.